The chain runs to 301 residues: Phosphoribosylaminoimidazole-succinocarboxamide synthase (301 aa).

This sequence belongs to the SAICAR synthetase family.

The catalysed reaction is 5-amino-1-(5-phospho-D-ribosyl)imidazole-4-carboxylate + L-aspartate + ATP = (2S)-2-[5-amino-1-(5-phospho-beta-D-ribosyl)imidazole-4-carboxamido]succinate + ADP + phosphate + 2 H(+). The protein operates within purine metabolism; IMP biosynthesis via de novo pathway; 5-amino-1-(5-phospho-D-ribosyl)imidazole-4-carboxamide from 5-amino-1-(5-phospho-D-ribosyl)imidazole-4-carboxylate: step 1/2. This is Phosphoribosylaminoimidazole-succinocarboxamide synthase from Syntrophobacter fumaroxidans (strain DSM 10017 / MPOB).